A 285-amino-acid chain; its full sequence is Golgi phosphoprotein 3-like (285 aa).

The tract at residues Met-1–Lys-42 is disordered. A compositionally biased stretch (basic and acidic residues) spans Arg-10–Lys-42. A 1,2-diacyl-sn-glycero-3-phospho-(1D-myo-inositol 4-phosphate) is bound by residues Trp-67 and Arg-76. Residue Ser-112 is modified to Phosphoserine. A 1,2-diacyl-sn-glycero-3-phospho-(1D-myo-inositol 4-phosphate) contacts are provided by Arg-157 and Arg-160. The tract at residues Glu-176–Thr-187 is beta-hairpin required for oligomerization.

This sequence belongs to the GOLPH3/VPS74 family. Homooligomer. Does not interact MYO18; differs from GOLPH3 by its inability to interact with MYO18. May interact with ARF1.

It is found in the golgi apparatus. The protein localises to the golgi stack membrane. It localises to the trans-Golgi network membrane. Functionally, phosphatidylinositol-4-phosphate-binding protein that may antagonize the action of GOLPH3 which is required for the process of vesicle budding at the Golgi and anterograde transport to the plasma membrane. This is Golgi phosphoprotein 3-like (GOLPH3L) from Homo sapiens (Human).